The following is a 161-amino-acid chain: Sec-independent protein translocase protein TatB (161 aa).

A helical membrane pass occupies residues 2–22 (FNDIGALELVTLVVLAVLVFG). Residues 102 to 161 (DAVHGRDAESSSSGSSSGSSSAASGNGRVDMSKKPEKPEKPGKTDKPAADDRPPFDMDAT) form a disordered region. Low complexity predominate over residues 111–126 (SSSSGSSSGSSSAASG). Positions 131-161 (DMSKKPEKPEKPGKTDKPAADDRPPFDMDAT) are enriched in basic and acidic residues.

The protein belongs to the TatB family. As to quaternary structure, the Tat system comprises two distinct complexes: a TatABC complex, containing multiple copies of TatA, TatB and TatC subunits, and a separate TatA complex, containing only TatA subunits. Substrates initially bind to the TatABC complex, which probably triggers association of the separate TatA complex to form the active translocon.

It localises to the cell membrane. Functionally, part of the twin-arginine translocation (Tat) system that transports large folded proteins containing a characteristic twin-arginine motif in their signal peptide across membranes. Together with TatC, TatB is part of a receptor directly interacting with Tat signal peptides. TatB may form an oligomeric binding site that transiently accommodates folded Tat precursor proteins before their translocation. The sequence is that of Sec-independent protein translocase protein TatB from Streptomyces coelicolor (strain ATCC BAA-471 / A3(2) / M145).